The sequence spans 371 residues: Zinc transporter ZIP13 (371 aa).

Topologically, residues 1–7 are lumenal; that stretch reads MPGCPCP. The helical transmembrane segment at 8–28 threads the bilayer; the sequence is GCGMAGPRLLFLTALALELLE. The Cytoplasmic segment spans residues 29-68; that stretch reads RAGGSQPALRSRGTATACRLDNKESESWGALLSGERLDTW. A helical transmembrane segment spans residues 69–89; the sequence is ICSLLGSLMVGLSGVFPLLVI. Residues 90–108 lie on the Lumenal side of the membrane; the sequence is PLEMGTMLRSEAGAWRLKQ. The helical transmembrane segment at 109-129 threads the bilayer; the sequence is LLSFALGGLLGNVFLHLLPEA. The Cytoplasmic segment spans residues 130-149; sequence WAYTCSASPGGEGQSLQQQQ. A helical membrane pass occupies residues 150 to 170; it reads QLGLWVIAGILTFLALEKMFL. The Lumenal segment spans residues 171-235; the sequence is DSKEEGTSQA…TIDNFTHGLA (65 aa). The chain crosses the membrane as a helical span at residues 236–256; sequence VAASFLVSKKIGLLTTMAILL. The XEXPHE-motif signature appears at 257–262; the sequence is HEIPHE. Residues 257 to 278 are Cytoplasmic-facing; sequence HEIPHEVGDFAILLRAGFDRWS. Residues 279-299 form a helical membrane-spanning segment; it reads AAKLQLSTALGGLLGAGFAIC. Topologically, residues 300–316 are lumenal; sequence TQSPKGVVGCSPAAEET. A helical transmembrane segment spans residues 317–337; that stretch reads AAWVLPFTSGGFLYIALVNVL. At 338 to 349 the chain is on the cytoplasmic side; that stretch reads PDLLEEEDPWRS. The chain crosses the membrane as a helical span at residues 350-370; it reads LQQLLLLCAGIVVMVLFSLFV. Residue aspartate 371 is a topological domain, lumenal.

The protein belongs to the ZIP transporter (TC 2.A.5) family. In terms of assembly, homodimer.

The protein localises to the golgi apparatus membrane. The protein resides in the cytoplasmic vesicle membrane. It is found in the endoplasmic reticulum membrane. It carries out the reaction Zn(2+)(in) = Zn(2+)(out). Functions as a zinc transporter transporting Zn(2+) from the Golgi apparatus to the cytosol and thus influences the zinc level at least in areas of the cytosol. May regulate beige adipocyte differentiation. This is Zinc transporter ZIP13 from Homo sapiens (Human).